We begin with the raw amino-acid sequence, 521 residues long: Exoglucanase 1 (521 aa).

The first 17 residues, 1-17, serve as a signal peptide directing secretion; sequence MLAKFAALAALVASANA. A catalytic region spans residues 18–450; that stretch reads QAVCSLTAET…FGPIGSTFSG (433 aa). Residue Asn-32 is glycosylated (N-linked (GlcNAc...) asparagine). The Nucleophile role is filled by Glu-229. Residue Glu-234 is the Proton donor of the active site. Asn-287 carries an N-linked (GlcNAc...) asparagine glycan. The interval 447–486 is disordered; it reads TFSGGSSGTPPSNPSSSVKPVTSTAKPSSTSTASNPSGTG. Residues 451–485 are linker; that stretch reads GSSGTPPSNPSSSVKPVTSTAKPSSTSTASNPSGT. Positions 485 to 521 constitute a CBM1 domain; sequence TGAAHWAQCGGIGFSGPTTCQSPYTCQKINDYYSQCV. 2 disulfides stabilise this stretch: Cys-493–Cys-510 and Cys-504–Cys-520.

It belongs to the glycosyl hydrolase 7 (cellulase C) family.

It localises to the secreted. The enzyme catalyses Hydrolysis of (1-&gt;4)-beta-D-glucosidic linkages in cellulose and cellotetraose, releasing cellobiose from the non-reducing ends of the chains.. The sequence is that of Exoglucanase 1 (cbh-1) from Neurospora crassa (strain ATCC 24698 / 74-OR23-1A / CBS 708.71 / DSM 1257 / FGSC 987).